The primary structure comprises 482 residues: Chromosome stability protein 9 (482 aa).

2 disordered regions span residues 239-263 (SSLR…VNKN) and 418-482 (SGLA…RRIR). Residues 240–249 (SLRNSSKNNN) are compositionally biased toward low complexity. Over residues 250–263 (GTVTPSTSGRVNKN) the composition is skewed to polar residues. Residues 418–437 (SGLAFSSSSNSLQQSKLPKS) are compositionally biased toward low complexity. 2 stretches are compositionally biased toward polar residues: residues 440–453 (LKRS…TNTH) and 463–473 (RSSNTVLGSSK).

As to quaternary structure, component of the synapsis initiation complex composed of at least ZIP2, ZIP3, MSH4 and MSH5. Also interacts with ZIP1, MRE11, RAD51 and RAD53.

Its subcellular location is the nucleus. It is found in the chromosome. Its function is as follows. Component of the synapsis initiation complex (SIC) necessary for the synaptonemal complex assembly. Stabilizes the ZIP2 component to the chromosomes. The SIC complex loads onto chromosomes and nucleates ZIP1 polymerization, a molecular zipper that acts to bring homologous chromosomes in close apposition, which is required for meiotic crossover. May also be involved in double strand break repair. The protein is Chromosome stability protein 9 (CST9) of Saccharomyces cerevisiae (strain ATCC 204508 / S288c) (Baker's yeast).